A 52-amino-acid chain; its full sequence is Large ribosomal subunit protein bL33A (52 aa).

This sequence belongs to the bacterial ribosomal protein bL33 family.

The sequence is that of Large ribosomal subunit protein bL33A from Staphylococcus aureus (strain USA300).